We begin with the raw amino-acid sequence, 999 residues long: Ulvan lyase, long isoform (999 aa).

The N-terminal stretch at 1 to 21 (MKCLKTLLVSTTLLTAFSLNA) is a signal peptide. 126 to 127 (SH) serves as a coordination point for substrate. Residue histidine 127 is the Proton donor/acceptor of the active site. The Ca(2+) site is built by aspartate 189, aspartate 199, and lysine 201. Positions 280 and 297 each coordinate substrate. Ca(2+)-binding residues include aspartate 300, aspartate 303, and tyrosine 305. Tyrosine 361 provides a ligand contact to substrate.

It belongs to the polysaccharide lyase 24 family.

Its function is as follows. Ulvan lyase involved in ulvan degradation. Ulvan is the main polysaccharide component of the Ulvales (green seaweed) cell wall. It is composed of disaccharide building blocks comprising 3-sulfated rhamnose (Rha3S) linked to D-glucuronic acid (GlcA), L-iduronic acid (IduA), or D-xylose (Xyl). Ulvan lyase catalyzes preferentially the endolytic cleavage of the glycosidic bond between Rha3S and the uronic acid GlcA, but not IduA, producing oligosaccharides that have unsaturated 4-deoxy-L-threo-hex-4-enopyranosiduronic acid (deltaUA) at the non-reducing end. The most abundant end products in the degradation of the ulvan polysaccharide were deltaUA-Rha3S disaccharides and deltaUA-Rha3S-IduA-Rha3S and deltaUA-Rha3S-Xyl-Rha3S tetrasaccharides. This chain is Ulvan lyase, long isoform, found in Alteromonas sp. (strain LOR).